We begin with the raw amino-acid sequence, 271 residues long: Fatty acid elongase A (271 aa).

Helical transmembrane passes span 35–55 (ILFP…LQIF), 68–88 (AMFH…GIVI), 102–122 (IICK…FYLS), 139–159 (SLLF…WANL), 165–185 (CQWV…FYYF), 198–220 (HITT…WHFY), and 237–257 (TSAF…QFFV).

It belongs to the ELO family.

It is found in the membrane. The enzyme catalyses a very-long-chain acyl-CoA + malonyl-CoA + H(+) = a very-long-chain 3-oxoacyl-CoA + CO2 + CoA. Its function is as follows. Fatty acid elongase with strict substrate specificity for monounsaturated fatty acids, in particular 16:1 (delta-9) to produce the unusual 18:1 (delta-11) fatty acid. This chain is Fatty acid elongase A (eloA), found in Dictyostelium discoideum (Social amoeba).